Here is a 65-residue protein sequence, read N- to C-terminus: Large ribosomal subunit protein bL35 (65 aa).

Positions 1–23 (MPKIKTNRGAAKRFKKTGTGKVK) are disordered. Residues 10–23 (AAKRFKKTGTGKVK) show a composition bias toward basic residues.

The protein belongs to the bacterial ribosomal protein bL35 family.

The sequence is that of Large ribosomal subunit protein bL35 from Trichlorobacter lovleyi (strain ATCC BAA-1151 / DSM 17278 / SZ) (Geobacter lovleyi).